Reading from the N-terminus, the 187-residue chain is Adenine phosphoribosyltransferase (187 aa).

Residue 133 to 137 (ATGGS) coordinates AMP.

This sequence belongs to the purine/pyrimidine phosphoribosyltransferase family. Homodimer. Requires Mg(2+) as cofactor.

The protein resides in the cytoplasm. Its subcellular location is the nucleus. It catalyses the reaction AMP + diphosphate = 5-phospho-alpha-D-ribose 1-diphosphate + adenine. Its pathway is purine metabolism; AMP biosynthesis via salvage pathway; AMP from adenine: step 1/1. Functionally, catalyzes a salvage reaction resulting in the formation of AMP, that is energically less costly than de novo synthesis. The chain is Adenine phosphoribosyltransferase (APT1) from Eremothecium gossypii (strain ATCC 10895 / CBS 109.51 / FGSC 9923 / NRRL Y-1056) (Yeast).